The following is a 241-amino-acid chain: Octanoyltransferase (241 aa).

The region spanning 38 to 227 is the BPL/LPL catalytic domain; sequence AGGPDTLLLL…AVCNALDGAL (190 aa). Residues 85 to 92, 157 to 159, and 170 to 172 contribute to the substrate site; these read RGGKITWH, AIG, and GFA. Cys188 serves as the catalytic Acyl-thioester intermediate.

Belongs to the LipB family.

It is found in the cytoplasm. The enzyme catalyses octanoyl-[ACP] + L-lysyl-[protein] = N(6)-octanoyl-L-lysyl-[protein] + holo-[ACP] + H(+). It functions in the pathway protein modification; protein lipoylation via endogenous pathway; protein N(6)-(lipoyl)lysine from octanoyl-[acyl-carrier-protein]: step 1/2. Functionally, catalyzes the transfer of endogenously produced octanoic acid from octanoyl-acyl-carrier-protein onto the lipoyl domains of lipoate-dependent enzymes. Lipoyl-ACP can also act as a substrate although octanoyl-ACP is likely to be the physiological substrate. The polypeptide is Octanoyltransferase (Mycobacterium ulcerans (strain Agy99)).